The primary structure comprises 23 residues: Phallacidin proprotein 1 (23 aa).

Pro-1 is a propeptide. The cyclopeptide (Ala-Pro) cross-link spans 2–8 (AWLVDCP). The segment at residues 3–7 (WLVDC) is a cross-link (2'-cysteinyl-6'-hydroxytryptophan sulfoxide (Trp-Cys)). Positions 9–23 (CVGDDVNRLLTRGER) are excised as a propeptide.

The protein belongs to the MSDIN fungal toxin family. In terms of processing, processed by the macrocyclase-peptidase enzyme POPB to yield a toxic cyclic heptapeptide. POPB first removes 10 residues from the N-terminus. Conformational trapping of the remaining peptide forces the enzyme to release this intermediate rather than proceed to macrocyclization. The enzyme rebinds the remaining peptide in a different conformation and catalyzes macrocyclization of the N-terminal 7 residues.

Toxin that belongs to the bicyclic heptapeptides called phallotoxins. Although structurally related to amatoxins, phallotoxins have a different mode of action, which is the stabilization of F-actin. Phallotoxins are poisonous when administered parenterally, but not orally because of poor absorption. This is Phallacidin proprotein 1 from Amanita exitialis (Guangzhou destroying angel).